The sequence spans 353 residues: Very-long-chain 3-oxoacyl-CoA reductase (353 aa).

A helical membrane pass occupies residues 33 to 53 (AAWALIAAGGFFVISRALLFG). Positions 78, 133, 141, 160, 227, 231, 260, and 262 each coordinate NADP(+). Tyr227 functions as the Proton donor in the catalytic mechanism. The Lowers pKa of active site Tyr role is filled by Lys231.

It belongs to the short-chain dehydrogenases/reductases (SDR) family.

It is found in the endoplasmic reticulum membrane. The catalysed reaction is a very-long-chain (3R)-3-hydroxyacyl-CoA + NADP(+) = a very-long-chain 3-oxoacyl-CoA + NADPH + H(+). Its pathway is lipid metabolism; fatty acid biosynthesis. In terms of biological role, component of the microsomal membrane bound fatty acid elongation system, which produces the 26-carbon very long-chain fatty acids (VLCFA) from palmitate. Catalyzes the reduction of the 3-ketoacyl-CoA intermediate that is formed in each cycle of fatty acid elongation. VLCFAs serve as precursors for ceramide and sphingolipids. The sequence is that of Very-long-chain 3-oxoacyl-CoA reductase from Aspergillus terreus (strain NIH 2624 / FGSC A1156).